Reading from the N-terminus, the 168-residue chain is Shikimate kinase (168 aa).

10–15 (GVGKTT) is an ATP binding site. Thr-14 contacts Mg(2+). Substrate is bound by residues Asp-32, Arg-56, and Gly-77. Position 115 (Arg-115) interacts with ATP. Position 133 (Arg-133) interacts with substrate.

The protein belongs to the shikimate kinase family. Monomer. Requires Mg(2+) as cofactor.

It localises to the cytoplasm. It catalyses the reaction shikimate + ATP = 3-phosphoshikimate + ADP + H(+). It functions in the pathway metabolic intermediate biosynthesis; chorismate biosynthesis; chorismate from D-erythrose 4-phosphate and phosphoenolpyruvate: step 5/7. In terms of biological role, catalyzes the specific phosphorylation of the 3-hydroxyl group of shikimic acid using ATP as a cosubstrate. The chain is Shikimate kinase from Macrococcus caseolyticus (strain JCSC5402) (Macrococcoides caseolyticum).